The sequence spans 83 residues: Putative defensin-like protein 110 (83 aa).

The N-terminal stretch at 1–24 is a signal peptide; it reads MAITKKNLIAFVFTILFVISYVHC. Disulfide bonds link cysteine 43/cysteine 81, cysteine 49/cysteine 73, cysteine 59/cysteine 79, and cysteine 63/cysteine 80.

Belongs to the DEFL family.

It is found in the secreted. The protein is Putative defensin-like protein 110 of Arabidopsis thaliana (Mouse-ear cress).